An 874-amino-acid polypeptide reads, in one-letter code: Alanine--tRNA ligase (874 aa).

Zn(2+) is bound by residues His564, His568, Cys665, and His669.

It belongs to the class-II aminoacyl-tRNA synthetase family. The cofactor is Zn(2+).

It localises to the cytoplasm. The enzyme catalyses tRNA(Ala) + L-alanine + ATP = L-alanyl-tRNA(Ala) + AMP + diphosphate. Catalyzes the attachment of alanine to tRNA(Ala) in a two-step reaction: alanine is first activated by ATP to form Ala-AMP and then transferred to the acceptor end of tRNA(Ala). Also edits incorrectly charged Ser-tRNA(Ala) and Gly-tRNA(Ala) via its editing domain. In Paraburkholderia phymatum (strain DSM 17167 / CIP 108236 / LMG 21445 / STM815) (Burkholderia phymatum), this protein is Alanine--tRNA ligase.